We begin with the raw amino-acid sequence, 747 residues long: MIAKHVPMRSLGKSDFAGLANYITDAQSKDHRLGHVQATNCEAGSIQDAITEVLATQHTNTRAKGDKTYHLIVSFRAGEQPSADTLRAIEERICVGLGYGEHQRISAVHNDTDNLHIHIAINKIHPTRHTMHEPYYPHRALAELCTALERDYGLERDNHEPRKRGAEGRAADMERHAGVESLVGWIKRECLDEIKGAQSWQELHQVMRDNGMELRVRANGLVFEAGDGTMVKASTVARDLSKPSLEARLGPFEASPERQAQTTAKRQYRKDPIRLRVNTVELYAKYKAEQQSLTTARAQALERARHRKDRLIEAAKRSNRLRRATIKVVGEGRANKKLLYAQASKALRSEIQAINKQFQQERTALYAEHSRRTWADWLKKEAQHGGADALAALRAREAAQGLKGNTIRGEGQAKPGHAPAVDNITKKGTIIFRAGMSAVRDDGDRLQVSREATREGLQEALRLAMQRYGNRITVNGTVEFKAQMIRAAVDSQLPITFTDPALESRRQALLNKENTHERTERPEHRGRTGRGAGGPGQRPAADQHATGAAAVARAGDGRPAAGRGDRADAGLHAATVHRKPDVGRLGRKPPPQSQHRLRALSELGVVRIAGGSEVLLPRDVPRHVEQQGTQPDHALRRGISRPGTGVGQTPPGVAAADKYIAEREAKRLKGFDIPKHSRYTAGDGALTFQGTRTIEGQALALLKRGDEVMVMPIDQATARRLTRIAVGRDAVSITAKGSIKTSKGRSR.

Disordered regions lie at residues 510–594 (LNKE…PQSQ) and 624–652 (VEQQGTQPDHALRRGISRPGTGVGQTPPG). Over residues 513 to 526 (ENTHERTERPEHRG) the composition is skewed to basic and acidic residues. Residues 537-562 (QRPAADQHATGAAAVARAGDGRPAAG) are compositionally biased toward low complexity.

Its function is as follows. The initiation process of transfer DNA synthesis requires the interaction of at least three plasmid-specific components (TraH, TraI, and TraJ) at the transfer origin resulting in the assembly of a specialized nucleoprotein complex - the relaxosome. Site and strand specific cleavage at the transfer origin is dependent on TraI and TraJ. This chain is Protein TraI (traI), found in Escherichia coli.